The following is a 282-amino-acid chain: DegV domain-containing protein spr1415 (282 aa).

A DegV domain is found at 3–280; sequence LAVFTDSSAY…AGSIALGYIP (278 aa). Hexadecanoate contacts are provided by threonine 61 and serine 94.

Its function is as follows. May bind long-chain fatty acids, such as palmitate, and may play a role in lipid transport or fatty acid metabolism. This is DegV domain-containing protein spr1415 from Streptococcus pneumoniae (strain ATCC BAA-255 / R6).